A 379-amino-acid polypeptide reads, in one-letter code: Homoserine O-succinyltransferase (379 aa).

The region spanning 51-360 is the AB hydrolase-1 domain; that stretch reads NAVLICHALS…DSPYGHDAFL (310 aa). Catalysis depends on Ser-157, which acts as the Nucleophile. Residue Arg-227 participates in substrate binding. Residues Asp-323 and His-356 contribute to the active site. Asp-357 contacts substrate.

Belongs to the AB hydrolase superfamily. MetX family. As to quaternary structure, homodimer.

The protein resides in the cytoplasm. The catalysed reaction is L-homoserine + succinyl-CoA = O-succinyl-L-homoserine + CoA. It participates in amino-acid biosynthesis; L-methionine biosynthesis via de novo pathway; O-succinyl-L-homoserine from L-homoserine: step 1/1. Its function is as follows. Transfers a succinyl group from succinyl-CoA to L-homoserine, forming succinyl-L-homoserine. The polypeptide is Homoserine O-succinyltransferase (Pseudomonas putida (strain ATCC 700007 / DSM 6899 / JCM 31910 / BCRC 17059 / LMG 24140 / F1)).